The primary structure comprises 801 residues: Sucrose synthase isoform 2 (801 aa).

The GT-B glycosyltransferase stretch occupies residues 271–748 (MIFNVVILSP…GLKRIQEKYT (478 aa)).

Belongs to the glycosyltransferase 1 family. Plant sucrose synthase subfamily. As to quaternary structure, homotetramer. Exclusively expressed in flowers.

The catalysed reaction is an NDP-alpha-D-glucose + D-fructose = a ribonucleoside 5'-diphosphate + sucrose + H(+). In terms of biological role, sucrose-cleaving enzyme that provides UDP-glucose and fructose for various metabolic pathways. The chain is Sucrose synthase isoform 2 from Daucus carota (Wild carrot).